Reading from the N-terminus, the 366-residue chain is MELAEIRNELEKTAQQIKDFRGSLDLDSMEVRIAELEDQMLDPNFWNDQQAAQKVINESNGYKETYQAFHALEEEQESMEISLELLKEEADEDLQEELEKDIKAYMATISAFELKLMLSDPYDKNNAILELHPGAGGTESQDWGSMLLRMYQRWSEKKGFKVEMLDYQAGDEAGIKSVTLLIKGHNAYGYLKAEKGVHRLVRISPFDSSGRRHTSFVSVDVMPELDGDIEIEVRTEDLKIDTYRATGAGGQHINTTDSAVRMTHIPSGIVVTCQSERSQLKNREQAMKMLKTKLYQKEQEEKERELAEIRGEQKEIGWGSQIRSYVFHPYSMVKDHRTNYETGNIQAVMDGDLDDFINAYLRSRIG.

N5-methylglutamine is present on Q251.

This sequence belongs to the prokaryotic/mitochondrial release factor family. Post-translationally, methylated by PrmC. Methylation increases the termination efficiency of RF2.

The protein resides in the cytoplasm. In terms of biological role, peptide chain release factor 2 directs the termination of translation in response to the peptide chain termination codons UGA and UAA. This is Peptide chain release factor 2 (prfB) from Listeria monocytogenes serovar 1/2a (strain ATCC BAA-679 / EGD-e).